We begin with the raw amino-acid sequence, 179 residues long: Vi polysaccharide biosynthesis protein TviA (179 aa).

It functions in the pathway glycan metabolism; Vi-antigen biosynthesis. Its pathway is capsule biogenesis; capsule polysaccharide biosynthesis. The protein is Vi polysaccharide biosynthesis protein TviA (tviA) of Salmonella typhi.